A 343-amino-acid chain; its full sequence is MGNADERRFEVLRAIVADFVATKEPIGSRALVERHNLGVSSATIRNDMAVLEAEGYITQPHTSSGRVPTEKGYREFVDRLEDVKPLSAAERRAIQSFLESGVDLDDVLRRAVRLLAQLTCQVAVVQYPTLSTSTVRHLEVIALSPARLLMVVITESGRVDQRIAELGDVIDDYQLSQLREMLSQAMGGKKLSAASAAVADLVGRFRGTGGLANAVGRSANVLLESLVEHTEERLLLGGTANLTRNSADFGGSLRSILEALEEQVVVLRLLAAQQEAGKVTVRIGHETAAEQIMGTSMVSTAYGTSGTVYGGMGVLGPTRMDYPGTIASVAAVALYIGEVLGAR.

It belongs to the HrcA family.

Its function is as follows. Negative regulator of class I heat shock genes (grpE-dnaK-dnaJ and groELS operons). Prevents heat-shock induction of these operons. This is Heat-inducible transcription repressor HrcA from Mycobacterium leprae (strain Br4923).